Here is a 223-residue protein sequence, read N- to C-terminus: 3,4-dihydroxy-2-butanone 4-phosphate synthase (223 aa).

D-ribulose 5-phosphate-binding positions include 47 to 48 (RE), Asp52, 160 to 164 (RRGHT), and Glu184. Residue Glu48 participates in Mg(2+) binding. Position 163 (His163) interacts with Mg(2+).

The protein belongs to the DHBP synthase family. As to quaternary structure, homodimer. Mg(2+) serves as cofactor. Mn(2+) is required as a cofactor.

It catalyses the reaction D-ribulose 5-phosphate = (2S)-2-hydroxy-3-oxobutyl phosphate + formate + H(+). It participates in cofactor biosynthesis; riboflavin biosynthesis; 2-hydroxy-3-oxobutyl phosphate from D-ribulose 5-phosphate: step 1/1. In terms of biological role, catalyzes the conversion of D-ribulose 5-phosphate to formate and 3,4-dihydroxy-2-butanone 4-phosphate. In Cupriavidus pinatubonensis (strain JMP 134 / LMG 1197) (Cupriavidus necator (strain JMP 134)), this protein is 3,4-dihydroxy-2-butanone 4-phosphate synthase.